A 327-amino-acid polypeptide reads, in one-letter code: Beta-ketoacyl-[acyl-carrier-protein] synthase III (327 aa).

Catalysis depends on residues Cys-112 and His-253. Positions 254 to 258 are ACP-binding; the sequence is QANER. Asn-283 is a catalytic residue.

Belongs to the thiolase-like superfamily. FabH family. In terms of assembly, homodimer.

The protein localises to the cytoplasm. It catalyses the reaction malonyl-[ACP] + acetyl-CoA + H(+) = 3-oxobutanoyl-[ACP] + CO2 + CoA. It functions in the pathway lipid metabolism; fatty acid biosynthesis. Functionally, catalyzes the condensation reaction of fatty acid synthesis by the addition to an acyl acceptor of two carbons from malonyl-ACP. Catalyzes the first condensation reaction which initiates fatty acid synthesis and may therefore play a role in governing the total rate of fatty acid production. Possesses both acetoacetyl-ACP synthase and acetyl transacylase activities. Its substrate specificity determines the biosynthesis of branched-chain and/or straight-chain of fatty acids. This chain is Beta-ketoacyl-[acyl-carrier-protein] synthase III, found in Chlamydia muridarum (strain MoPn / Nigg).